A 207-amino-acid polypeptide reads, in one-letter code: MLRVLGLAGMLMSFNIHAAMISPVSGVKILFANGTEVDEPLEPMEVDAKSAQLVVRYAAELGSGSNQKVFDSAPFVITIDNLSEDIKLYPPKVFSYEQANREFNTSPKWRIEGVSGKEISYSQEKLKGNDGFMPYYGMEALIAKHNEERGIVFSAGVVKAEVVTTDKMVEKPATTKNADALVQLQHWYKQASTEERKAFRKWMVDQE.

Positions 1–18 (MLRVLGLAGMLMSFNIHA) are cleaved as a signal peptide.

Belongs to the UPF0319 family.

In Vibrio vulnificus (strain YJ016), this protein is UPF0319 protein VV2327.